Here is a 572-residue protein sequence, read N- to C-terminus: MRTSQYLLSTLKETPADAEVISHQLMLRAGMIRKLASGLYTWLPTGVRVLKKVENIVREEMNNAGAIEVLMPVVQPSELWQESGRWEQYGPELLRIADRGDRPFVLGPTHEEVITDLIRNELNSYKQLPLNFYQIQTKFRDEVRPRFGVMRSREFLMKDAYSFHTSQESLQETYDAMYAAYSKIFSRMGLDFRAVQADTGSIGGSASHEFQVLAQSGEDDVIFSDSSDYAANIEFAEAVAPKEPRAAATQEMTLVDTPNAKTIAELVEQFNLPIEKTVKTLLVKAVEDSASPLVALLVRGDHELNEVKAEKLPQVASPLTFATEEEIRALVNAGPGSLGPVNMPVPVIIDRTVAVMSDFAAGANIDGKHYFGINWDRDVATPEVADIRNVVAGDPSPDGKGTLLIKRGIEVGHIFQLGTKYSEAMKAAVQGEDGRNQILTMGCYGIGVTRVVAAAIEQNFDDRGIVWPDAIAPFQVAILPMNMHKSYRVQELAEKLYAELSAQGIEVLMDDRKERPGVMFADMELIGIPHTIVLGDRNLDNDDIEYKYRRNGEKQLIKTGDIVEYLVKAIKG.

The protein belongs to the class-II aminoacyl-tRNA synthetase family. ProS type 1 subfamily. In terms of assembly, homodimer.

The protein resides in the cytoplasm. It catalyses the reaction tRNA(Pro) + L-proline + ATP = L-prolyl-tRNA(Pro) + AMP + diphosphate. In terms of biological role, catalyzes the attachment of proline to tRNA(Pro) in a two-step reaction: proline is first activated by ATP to form Pro-AMP and then transferred to the acceptor end of tRNA(Pro). As ProRS can inadvertently accommodate and process non-cognate amino acids such as alanine and cysteine, to avoid such errors it has two additional distinct editing activities against alanine. One activity is designated as 'pretransfer' editing and involves the tRNA(Pro)-independent hydrolysis of activated Ala-AMP. The other activity is designated 'posttransfer' editing and involves deacylation of mischarged Ala-tRNA(Pro). The misacylated Cys-tRNA(Pro) is not edited by ProRS. The protein is Proline--tRNA ligase of Klebsiella pneumoniae subsp. pneumoniae (strain ATCC 700721 / MGH 78578).